A 214-amino-acid polypeptide reads, in one-letter code: MTTLADLRTNYSRASLDAADVNPNPFVQFDVWFKEALDAQLPEPNTMTLATVDESGRPSARIVLIKGADERGFVFFTNYESRKGRELAHNPNAALLFYWIELERQVRVEGRIEKTSEEESDRYFASRPLGSRIGAWASEQSAVIESRALLEAREKEIGARFGENPPRPPHWGGYRLVPSSIEFWQGRPSRLHDRLLYTRDAASASGWKIARLAP.

Substrate contacts are provided by residues 8–11 (RTNY) and lysine 66. Residues 61–66 (RIVLIK), 76–77 (FT), arginine 82, lysine 83, and glutamine 105 each bind FMN. Tyrosine 123, arginine 127, and serine 131 together coordinate substrate. FMN contacts are provided by residues 140 to 141 (QS) and tryptophan 184. Residue 190–192 (RLH) coordinates substrate. Position 194 (arginine 194) interacts with FMN.

The protein belongs to the pyridoxamine 5'-phosphate oxidase family. As to quaternary structure, homodimer. It depends on FMN as a cofactor.

The catalysed reaction is pyridoxamine 5'-phosphate + O2 + H2O = pyridoxal 5'-phosphate + H2O2 + NH4(+). It catalyses the reaction pyridoxine 5'-phosphate + O2 = pyridoxal 5'-phosphate + H2O2. It functions in the pathway cofactor metabolism; pyridoxal 5'-phosphate salvage; pyridoxal 5'-phosphate from pyridoxamine 5'-phosphate: step 1/1. The protein operates within cofactor metabolism; pyridoxal 5'-phosphate salvage; pyridoxal 5'-phosphate from pyridoxine 5'-phosphate: step 1/1. Its function is as follows. Catalyzes the oxidation of either pyridoxine 5'-phosphate (PNP) or pyridoxamine 5'-phosphate (PMP) into pyridoxal 5'-phosphate (PLP). This Burkholderia pseudomallei (strain 1106a) protein is Pyridoxine/pyridoxamine 5'-phosphate oxidase.